The primary structure comprises 456 residues: Probable glycine dehydrogenase (decarboxylating) subunit 1 (456 aa).

Belongs to the GcvP family. N-terminal subunit subfamily. In terms of assembly, the glycine cleavage system is composed of four proteins: P, T, L and H. In this organism, the P 'protein' is a heterodimer of two subunits.

It catalyses the reaction N(6)-[(R)-lipoyl]-L-lysyl-[glycine-cleavage complex H protein] + glycine + H(+) = N(6)-[(R)-S(8)-aminomethyldihydrolipoyl]-L-lysyl-[glycine-cleavage complex H protein] + CO2. The glycine cleavage system catalyzes the degradation of glycine. The P protein binds the alpha-amino group of glycine through its pyridoxal phosphate cofactor; CO(2) is released and the remaining methylamine moiety is then transferred to the lipoamide cofactor of the H protein. This Legionella pneumophila (strain Paris) protein is Probable glycine dehydrogenase (decarboxylating) subunit 1.